A 108-amino-acid chain; its full sequence is uncharacterized protein (108 aa).

Residues 10–32 (LQAPYILCTSFITLKIHNFFFFF) traverse the membrane as a helical segment.

It is found in the membrane. This is an uncharacterized protein from Saccharomyces cerevisiae (strain ATCC 204508 / S288c) (Baker's yeast).